Here is a 303-residue protein sequence, read N- to C-terminus: Acetyl-coenzyme A carboxylase carboxyl transferase subunit beta (303 aa).

The CoA carboxyltransferase N-terminal domain occupies 25 to 294; that stretch reads LWIKCPETGE…NDVSAKSLNG (270 aa).

It belongs to the AccD/PCCB family. In terms of assembly, acetyl-CoA carboxylase is a heterohexamer composed of biotin carboxyl carrier protein (AccB), biotin carboxylase (AccC) and two subunits each of ACCase subunit alpha (AccA) and ACCase subunit beta (AccD).

It localises to the cytoplasm. The enzyme catalyses N(6)-carboxybiotinyl-L-lysyl-[protein] + acetyl-CoA = N(6)-biotinyl-L-lysyl-[protein] + malonyl-CoA. The protein operates within lipid metabolism; malonyl-CoA biosynthesis; malonyl-CoA from acetyl-CoA: step 1/1. Component of the acetyl coenzyme A carboxylase (ACC) complex. Biotin carboxylase (BC) catalyzes the carboxylation of biotin on its carrier protein (BCCP) and then the CO(2) group is transferred by the transcarboxylase to acetyl-CoA to form malonyl-CoA. The polypeptide is Acetyl-coenzyme A carboxylase carboxyl transferase subunit beta (Rhizobium rhizogenes (strain K84 / ATCC BAA-868) (Agrobacterium radiobacter)).